A 176-amino-acid chain; its full sequence is Protein KleF (176 aa).

In Escherichia coli, this protein is Protein KleF (kleF).